A 461-amino-acid chain; its full sequence is Lysosomal proton-coupled steroid conjugate and bile acid symporter SLC46A3 (461 aa).

The N-terminal stretch at 1–25 is a signal peptide; that stretch reads MKISFIEPAILLYAFAMTLTIPLTA. The Extracellular portion of the chain corresponds to 26–70; that stretch reads QYVYRRIWEETGNYTFTSSSNVSECEQNKSSSTFAFQEEVQKKAS. N-linked (GlcNAc...) asparagine glycosylation is found at asparagine 38, asparagine 46, and asparagine 53. The helical transmembrane segment at 71-91 threads the bilayer; the sequence is LFSLQVEISGLIPGLVSTFML. Residues 92–103 are Cytoplasmic-facing; sequence LSSSDNHGRKLP. A helical transmembrane segment spans residues 104-124; it reads MVLSSLGSLGTNLWLCAMSYF. Residues 125 to 135 are Extracellular-facing; it reads DLPLQLLVAST. A helical membrane pass occupies residues 136 to 156; sequence FIGALFGNYTTFWGACFAYIV. Residues 157-170 are Cytoplasmic-facing; that stretch reads DQEKEYKHRIIRIA. The chain crosses the membrane as a helical span at residues 171–191; that stretch reads VLDFMLGVVTGLTGLSSGYFI. The Extracellular portion of the chain corresponds to 192–197; that stretch reads RELGFA. The chain crosses the membrane as a helical span at residues 198–218; it reads WSYFIIAVVVLVNLAYILFFL. The Cytoplasmic portion of the chain corresponds to 219–260; it reads SDPIKESSSQIVTMSCSESLKDLFYRTYMLFKNGSCKRRSLL. The helical transmembrane segment at 261-281 threads the bilayer; the sequence is CLLIFTLVVYFFVVFGITPVF. The Extracellular segment spans residues 282–301; it reads TLYELGPPLCWNEVYIGYGS. The helical transmembrane segment at 302–322 threads the bilayer; sequence ALGSLSFLSSFLGIWLFSYCL. At 323–324 the chain is on the cytoplasmic side; it reads KD. A helical membrane pass occupies residues 325 to 345; that stretch reads IHIAYVGIFTTMVGMMLTAFT. The Extracellular portion of the chain corresponds to 346–347; the sequence is RT. Residues 348-368 form a helical membrane-spanning segment; it reads TLMMFLVRISFFFTIMPLSIL. The Cytoplasmic segment spans residues 369 to 381; it reads RSMLSKVVHSTEQ. Residues 382–402 traverse the membrane as a helical segment; it reads GVLFACIAFLETLGGVTSTSA. Residues 403–415 lie on the Extracellular side of the membrane; the sequence is YNGIYSATVAWYP. The chain crosses the membrane as a helical span at residues 416–436; sequence GFVFLLSAGLLVLPAVSLCMV. Topologically, residues 437 to 461 are cytoplasmic; that stretch reads KCIGWEEGSYTLLIHDEPSEHTSDS. The short motif at 446–449 is the Tyrosine-based lysosomal-sorting motif element; it reads YTLL.

The protein belongs to the major facilitator superfamily. SLC46A family.

Its subcellular location is the lysosome membrane. The catalysed reaction is estrone 3-sulfate(out) + n H(+)(out) = estrone 3-sulfate(in) + n H(+)(in). It catalyses the reaction 25-hydroxyvitamin D3 sulfate(out) + n H(+)(out) = 25-hydroxyvitamin D3 sulfate(in) + n H(+)(in). It carries out the reaction cholate(out) + n H(+)(out) = cholate(in) + n H(+)(in). The enzyme catalyses glycocholate(out) + n H(+)(out) = glycocholate(in) + n H(+)(in). The catalysed reaction is taurocholate(out) + n H(+)(out) = taurocholate(in) + n H(+)(in). It catalyses the reaction dehydroepiandrosterone 3-sulfate(out) + n H(+)(out) = dehydroepiandrosterone 3-sulfate(in) + n H(+)(in). It carries out the reaction N-acetyl-D-muramoyl-L-alanyl-D-isoglutamine(out) + n H(+)(out) = N-acetyl-D-muramoyl-L-alanyl-D-isoglutamine(in) + n H(+)(in). The enzyme catalyses 2',3'-cGAMP(out) + n H(+)(out) = 2',3'-cGAMP(in) + n H(+)(in). In terms of biological role, lysosomal proton-coupled steroid conjugate and bile acid transporter. Preferentially recognizes lipophilic steroid conjugates or bile acis as endogenous substrates and seems to mediate escape from lysosomes to the cytoplasm. Modulates hepatic cytosolic copper homeostasis, maybe acting as a lysosomal copper transporter and sequestering copper ions in the lysosome. Delivers pathogen-associated molecular patterns to cytosolic pattern recognition receptors as part of the innate immune response to microbes. Selectively transports bacterial muramyl dipeptide (MDP) into the cytosol for recognition by NOD2, triggering inflammatory responses. Likely acts as a redundant importer of cyclic GMP-AMP dinucleotides (cGAMPs) in monocyte and macrophage cell lineages. The transport mechanism, its electrogenicity and stoichiometry remain to be elucidated. In Rattus norvegicus (Rat), this protein is Lysosomal proton-coupled steroid conjugate and bile acid symporter SLC46A3 (Slc46a3).